The primary structure comprises 211 residues: Ribosomal RNA small subunit methyltransferase G (211 aa).

Residues glycine 76, leucine 81, 127–128, and arginine 142 each bind S-adenosyl-L-methionine; that span reads VE.

The protein belongs to the methyltransferase superfamily. RNA methyltransferase RsmG family.

It is found in the cytoplasm. It carries out the reaction guanosine(527) in 16S rRNA + S-adenosyl-L-methionine = N(7)-methylguanosine(527) in 16S rRNA + S-adenosyl-L-homocysteine. Its function is as follows. Specifically methylates the N7 position of guanine in position 527 of 16S rRNA. The protein is Ribosomal RNA small subunit methyltransferase G of Vibrio vulnificus (strain CMCP6).